A 194-amino-acid polypeptide reads, in one-letter code: MSGEELSGSETEGDAAVRFVLVAAVADNRVIGRDGTMPWHLPEDLKQFKRTTTGHPVVMGRKTYESIARQLGGPLPERHSVLLTTRDLDLPEGAEAVESVESAVAAAEDAADEMGVETVYVVGGATVYEQFLGRAAGLVLTELDAAHEGDTRFPEWDRGKWVETDRDDRDGFSFVTYERKQPAAADRGAEESDE.

Residues 18-194 (RFVLVAAVAD…ADRGAEESDE (177 aa)) enclose the DHFR domain. NADP(+) contacts are provided by residues alanine 24 and 30-36 (VIGRDGT). Aspartate 44 lines the substrate pocket. 62–63 (KT) is a binding site for NADP(+). Substrate is bound by residues arginine 69 and arginine 78. Residues 84 to 85 (TT) and 123 to 130 (GGATVYEQ) each bind NADP(+). Position 141 (threonine 141) interacts with substrate. Residues 173 to 194 (SFVTYERKQPAAADRGAEESDE) are disordered.

It belongs to the dihydrofolate reductase family.

The catalysed reaction is (6S)-5,6,7,8-tetrahydrofolate + NADP(+) = 7,8-dihydrofolate + NADPH + H(+). Its pathway is cofactor biosynthesis; tetrahydrofolate biosynthesis; 5,6,7,8-tetrahydrofolate from 7,8-dihydrofolate: step 1/1. Its activity is regulated as follows. Maximum activity at KCl concentration of 0.5 M and activity decreases with increasing concentration of KCl. Its function is as follows. Key enzyme in folate metabolism. Catalyzes an essential reaction for de novo glycine and purine synthesis, and for DNA precursor synthesis. The protein is Dihydrofolate reductase HdrB (hdrB) of Haloferax volcanii (Halobacterium volcanii).